We begin with the raw amino-acid sequence, 415 residues long: Heterogeneous nuclear ribonucleoprotein F (415 aa).

An N-acetylmethionine modification is found at Met1. Met2 is subject to N-acetylmethionine; in Heterogeneous nuclear ribonucleoprotein F, N-terminally processed. The RRM 1 domain occupies 11 to 90 (YVVKLRGLPW…RYIEVFKSHR (80 aa)). A Glycyl lysine isopeptide (Lys-Gly) (interchain with G-Cter in SUMO) cross-link involves residue Lys72. The tract at residues 81–86 (RYIEVF) is interaction with RNA. Residue Lys87 forms a Glycyl lysine isopeptide (Lys-Gly) (interchain with G-Cter in SUMO2) linkage. 3 positions are modified to phosphoserine: Ser104, Ser107, and Ser161. Residues 111-188 (GFVRLRGLPF…RYIEVFKSSQ (78 aa)) form the RRM 2 domain. Lys167 participates in a covalent cross-link: Glycyl lysine isopeptide (Lys-Gly) (interchain with G-Cter in SUMO2). The tract at residues 179–184 (RYIEVF) is interaction with RNA. Residue Lys185 forms a Glycyl lysine isopeptide (Lys-Gly) (interchain with G-Cter in SUMO2) linkage. A phosphoserine mark is found at Ser187, Ser193, and Ser195. Lys200 carries the post-translational modification N6-acetyllysine; alternate. Lys200 is covalently cross-linked (Glycyl lysine isopeptide (Lys-Gly) (interchain with G-Cter in SUMO2); alternate). Thr215 bears the Phosphothreonine mark. Lys224 is modified (N6-acetyllysine; alternate). Lys224 is covalently cross-linked (Glycyl lysine isopeptide (Lys-Gly) (interchain with G-Cter in SUMO2); alternate). Residue Ser265 is modified to Phosphoserine. The RRM 3 domain maps to 289–366 (HCVHMRGLPY…IELFLNSTTG (78 aa)). Residues 355-360 (RYIELF) are interaction with RNA.

As to quaternary structure, identified in the spliceosome C complex. Interacts with AGO1, AGO2, TBP and TXNL4/DIM1. Post-translationally, sumoylated.

Its subcellular location is the nucleus. The protein resides in the nucleoplasm. Component of the heterogeneous nuclear ribonucleoprotein (hnRNP) complexes which provide the substrate for the processing events that pre-mRNAs undergo before becoming functional, translatable mRNAs in the cytoplasm. Plays a role in the regulation of alternative splicing events. Binds G-rich sequences in pre-mRNAs and keeps target RNA in an unfolded state. The sequence is that of Heterogeneous nuclear ribonucleoprotein F (Hnrnpf) from Mus musculus (Mouse).